The primary structure comprises 201 residues: Adenylyl-sulfate kinase (201 aa).

The interval 1-23 (MALHDENVVWHSHPVTPQQREQH) is disordered. 35 to 42 (GLSGSGKS) contacts ATP. Ser-109 acts as the Phosphoserine intermediate in catalysis.

It belongs to the APS kinase family.

The catalysed reaction is adenosine 5'-phosphosulfate + ATP = 3'-phosphoadenylyl sulfate + ADP + H(+). It functions in the pathway sulfur metabolism; hydrogen sulfide biosynthesis; sulfite from sulfate: step 2/3. Functionally, catalyzes the synthesis of activated sulfate. This Escherichia coli O127:H6 (strain E2348/69 / EPEC) protein is Adenylyl-sulfate kinase.